Here is a 633-residue protein sequence, read N- to C-terminus: MHGLLLAGLLALPMNVLAHPAEHHASNVLSRRGVDIDSFRLPLKAKYMDNEAAAEKIQALSFTKDDDYVSTATKLVKSTFPKSTFRVVDDHYIGTNGIGHVHFKQTAHGLDIDNSDFNVNIDRDGKVFSFGNSFFTGEIPKENPMVKRAFSDPVKALKGAVKALSLPVKSDNAKAKNVAGKETVEFMGTSGALSAPKAKLVYLQKDDGTLALTWRVETDVGENWLLSYVDANNSETVHNVVDYVASAEYKVFAWGLNDPTEGNPTSIRDPWTDASPYTWNSDGNTKYPTTRGNNAIAQDNPTGGSQYLNNYRPQSPNLIFSYPWSATATPPSSYKDFSITQLFYTTNRFHDLLYSFGFNEAAGNFQVNNGNKGGRGNDFAIVNAQDGSGTNNANFATPPDGQPGRMRMYNWTTARPNRDGCLEAGIVIHEYAHGLSNRLCGGPANSACLNALESGGMGEGWGDFYATAIRLKPRDTKNTNYSMGAWAANNPKGIRAYLYSTSLQTNPYMYTSVNSLREVHQIGTVWASMLYELMWALIEAHGNTYSANPVFRNGVPQDGRHLAMKLVMDGMALQPCNPNFVQARDAIIDADRALTNSANKCTIWKAFAKRGLGYGAKYDSRNRTGSNQLPPGC.

The signal sequence occupies residues 1–18 (MHGLLLAGLLALPMNVLA). The propeptide occupies 19–246 (HPAEHHASNV…VHNVVDYVAS (228 aa)). N-linked (GlcNAc...) asparagine glycans are attached at residues asparagine 232 and asparagine 410. Histidine 429 is a binding site for Zn(2+). The active site involves glutamate 430. Histidine 433 is a Zn(2+) binding site. 2 N-linked (GlcNAc...) asparagine glycosylation sites follow: asparagine 480 and asparagine 622.

This sequence belongs to the peptidase M36 family. It depends on Zn(2+) as a cofactor.

The protein localises to the secreted. Its function is as follows. Secreted metalloproteinase that allows assimilation of proteinaceous substrates and probably acts as a virulence factor. This Arthroderma gypseum (strain ATCC MYA-4604 / CBS 118893) (Microsporum gypseum) protein is Extracellular metalloproteinase 3 (MEP3).